An 82-amino-acid polypeptide reads, in one-letter code: MTTIPAIGILPIDFLTILLLFSFISHSVCVEFAEDAGELDKSNAFRRQVPQWAVGHFMGKRSLSDDTEQATMYSSRFVESTS.

The N-terminal stretch at 1–27 (MTTIPAIGILPIDFLTILLLFSFISHS) is a signal peptide. Positions 28 to 47 (VCVEFAEDAGELDKSNAFRR) are excised as a propeptide. Methionine amide is present on Met58. A propeptide spanning residues 62–82 (SLSDDTEQATMYSSRFVESTS) is cleaved from the precursor.

It belongs to the bombesin/neuromedin-B/ranatensin family. Expressed by the skin glands.

Its subcellular location is the secreted. The protein is Ranatensin of Lithobates pipiens (Northern leopard frog).